A 487-amino-acid chain; its full sequence is Glutamyl-tRNA(Gln) amidotransferase subunit A (487 aa).

Active-site charge relay system residues include Lys77 and Ser152. Ser176 (acyl-ester intermediate) is an active-site residue.

This sequence belongs to the amidase family. GatA subfamily. Heterotrimer of A, B and C subunits.

It catalyses the reaction L-glutamyl-tRNA(Gln) + L-glutamine + ATP + H2O = L-glutaminyl-tRNA(Gln) + L-glutamate + ADP + phosphate + H(+). In terms of biological role, allows the formation of correctly charged Gln-tRNA(Gln) through the transamidation of misacylated Glu-tRNA(Gln) in organisms which lack glutaminyl-tRNA synthetase. The reaction takes place in the presence of glutamine and ATP through an activated gamma-phospho-Glu-tRNA(Gln). This chain is Glutamyl-tRNA(Gln) amidotransferase subunit A, found in Limosilactobacillus fermentum (strain NBRC 3956 / LMG 18251) (Lactobacillus fermentum).